The sequence spans 79 residues: M-myrmicitoxin(01)-Tb1a (79 aa).

An N-terminal signal peptide occupies residues 1 to 26; that stretch reads MKLSFLSLVLAIILVMALMYTPHAEA. A propeptide spanning residues 27–56 is cleaved from the precursor; sequence KAWADADADATAAADADADAVADALADAVA. Valine amide is present on V76.

It belongs to the formicidae venom precursor-01 superfamily. Post-translationally, the C-terminal amidation is important for antimicrobial activity, since a non-amidated synthetic peptide shows a reduced antimicrobial activity (2-20-fold depending on the strain tested). The amidation may play a positive role in the peptide conformation, since amidated peptide shows an increase of about 5% of helical content. As to expression, expressed by the venom gland.

The protein localises to the secreted. It is found in the target cell membrane. Antimicrobial peptide that shows antimicrobial activities against all microorganisms tested with minimal inhibitory concentrations (MICs) values ranging from 0.45 to 97.5 umol/L. This peptide kills the microorganisms by permeabilizating the membranes. It shows a very weak hemolytic activity (HC(50)=325 umol/L) and weak cytotoxicity against human lymphocytes (LC(50)=67.8 umol/L). Gram-negative bacteria tested are E.coli (MIC=24.4 umol/L), C.sakazakii (MIC=5.8 umol/L), P.aeruginosa (MIC=8.7-12.2 umol/L), S.enterica (MIC=5.4 umol/L), and H.pylori (MIC=0.99-3.9 umol/L). Gram-positive bacteria tested are E.hirae (MIC=12.2 umol/L), S.aureus (MIC=3.0-6.4 umol/L), methicillin-resistant S.aureus (MRSA) (MIC=8.7 umol/L), S.xylosus (MIC=0.45-1.3 umol/L), and B.subtilis (MIC=24.4 umol/L). Fungi tested are A.niger (MIC=0.75 umol/L), C.albicans (MIC=17.3 umol/L), G.candidum (MIC=97.5 umol/L), and S.cerevisiae (MIC=6.1 umol/L). Finally the parasite tested is L.infantum (MIC=1.5 umol/L). The chain is M-myrmicitoxin(01)-Tb1a from Tetramorium bicarinatum (Tramp ant).